A 306-amino-acid chain; its full sequence is Histone-lysine N-methyltransferase SETMAR (306 aa).

The Pre-SET domain occupies 60-123 (PGCACLKTPC…RCRNRVVQWG (64 aa)). 9 residues coordinate Zn(2+): C62, C64, C69, C74, C76, C105, C109, C111, and C115. Positions 126–250 (FHLQVFKTDH…PEEELSYDYS (125 aa)) constitute an SET domain. Residues 136-138 (KGW), Y179, R207, and 210-211 (NH) each bind S-adenosyl-L-methionine. Zn(2+) is bound by residues C213, C274, C276, and C281. The Post-SET domain maps to 270-286 (LRKPCYCGARSCAAFLP).

It belongs to the class V-like SAM-binding methyltransferase superfamily.

It is found in the nucleus. The protein localises to the chromosome. The enzyme catalyses L-lysyl(36)-[histone H3] + 2 S-adenosyl-L-methionine = N(6),N(6)-dimethyl-L-lysyl(36)-[histone H3] + 2 S-adenosyl-L-homocysteine + 2 H(+). In terms of biological role, histone methyltransferase that methylates 'Lys-4' and 'Lys-36' of histone H3, 2 specific tags for epigenetic transcriptional activation. Specifically mediates dimethylation of H3 'Lys-36'. This is Histone-lysine N-methyltransferase SETMAR from Bos taurus (Bovine).